Consider the following 545-residue polypeptide: Chaperonin GroEL 5 (545 aa).

ATP is bound by residues 30–33 (TLGP), Lys51, 87–91 (DGTTT), Gly415, and Asp495.

The protein belongs to the chaperonin (HSP60) family. Forms a cylinder of 14 subunits composed of two heptameric rings stacked back-to-back. Interacts with the co-chaperonin GroES.

It localises to the cytoplasm. The enzyme catalyses ATP + H2O + a folded polypeptide = ADP + phosphate + an unfolded polypeptide.. In terms of biological role, together with its co-chaperonin GroES, plays an essential role in assisting protein folding. The GroEL-GroES system forms a nano-cage that allows encapsulation of the non-native substrate proteins and provides a physical environment optimized to promote and accelerate protein folding. This Sinorhizobium medicae (strain WSM419) (Ensifer medicae) protein is Chaperonin GroEL 5.